Consider the following 432-residue polypeptide: Trigger factor (432 aa).

Positions 161–246 (GTRATINFVG…VVKVEARELP (86 aa)) constitute a PPIase FKBP-type domain.

Belongs to the FKBP-type PPIase family. Tig subfamily.

It is found in the cytoplasm. The enzyme catalyses [protein]-peptidylproline (omega=180) = [protein]-peptidylproline (omega=0). Functionally, involved in protein export. Acts as a chaperone by maintaining the newly synthesized protein in an open conformation. Functions as a peptidyl-prolyl cis-trans isomerase. This chain is Trigger factor, found in Aliivibrio salmonicida (strain LFI1238) (Vibrio salmonicida (strain LFI1238)).